Reading from the N-terminus, the 1129-residue chain is DNA-directed RNA polymerase I subunit RPA2 (1129 aa).

A C4-type zinc finger spans residues Cys-1061 to Cys-1093.

This sequence belongs to the RNA polymerase beta chain family. In terms of assembly, component of the RNA polymerase I (Pol I) complex consisting of at least 13 subunits.

It localises to the nucleus. The protein localises to the nucleolus. It carries out the reaction RNA(n) + a ribonucleoside 5'-triphosphate = RNA(n+1) + diphosphate. DNA-dependent RNA polymerase catalyzes the transcription of DNA into RNA using the four ribonucleoside triphosphates as substrates. Second largest core component of RNA polymerase I which synthesizes ribosomal RNA precursors. Proposed to contribute to the polymerase catalytic activity and forms the polymerase active center together with the largest subunit. Pol I is composed of mobile elements and RPA2 is part of the core element with the central large cleft and probably a clamp element that moves to open and close the cleft. The polypeptide is DNA-directed RNA polymerase I subunit RPA2 (Drosophila melanogaster (Fruit fly)).